A 174-amino-acid polypeptide reads, in one-letter code: ATP-dependent protease subunit HslV (174 aa).

Threonine 2 is an active-site residue. Residues glycine 157, cysteine 160, and threonine 163 each coordinate Na(+).

It belongs to the peptidase T1B family. HslV subfamily. A double ring-shaped homohexamer of HslV is capped on each side by a ring-shaped HslU homohexamer. The assembly of the HslU/HslV complex is dependent on binding of ATP.

Its subcellular location is the cytoplasm. The enzyme catalyses ATP-dependent cleavage of peptide bonds with broad specificity.. Its activity is regulated as follows. Allosterically activated by HslU binding. In terms of biological role, protease subunit of a proteasome-like degradation complex believed to be a general protein degrading machinery. This is ATP-dependent protease subunit HslV from Cellvibrio japonicus (strain Ueda107) (Pseudomonas fluorescens subsp. cellulosa).